We begin with the raw amino-acid sequence, 493 residues long: tRNA-2-methylthio-N(6)-dimethylallyladenosine synthase (493 aa).

Polar residues predominate over residues 1 to 14; it reads MPMTGLLQTTLSTA. The tract at residues 1–31 is disordered; sequence MPMTGLLQTTLSTADQDRSGPAATTGDTPAR. The MTTase N-terminal domain maps to 35 to 155; sequence KRLHVITWGC…LGGMVRRAMN (121 aa). The [4Fe-4S] cluster site is built by Cys-44, Cys-80, Cys-118, Cys-199, Cys-203, and Cys-206. Residues 185 to 417 enclose the Radical SAM core domain; sequence LAGGRTAFLT…QALLRTQQEA (233 aa). The 63-residue stretch at 420–482 folds into the TRAM domain; that stretch reads TACIGKTVNV…TNSLSATLPD (63 aa).

This sequence belongs to the methylthiotransferase family. MiaB subfamily. As to quaternary structure, monomer. [4Fe-4S] cluster serves as cofactor.

It is found in the cytoplasm. The catalysed reaction is N(6)-dimethylallyladenosine(37) in tRNA + (sulfur carrier)-SH + AH2 + 2 S-adenosyl-L-methionine = 2-methylsulfanyl-N(6)-dimethylallyladenosine(37) in tRNA + (sulfur carrier)-H + 5'-deoxyadenosine + L-methionine + A + S-adenosyl-L-homocysteine + 2 H(+). Functionally, catalyzes the methylthiolation of N6-(dimethylallyl)adenosine (i(6)A), leading to the formation of 2-methylthio-N6-(dimethylallyl)adenosine (ms(2)i(6)A) at position 37 in tRNAs that read codons beginning with uridine. This is tRNA-2-methylthio-N(6)-dimethylallyladenosine synthase from Granulibacter bethesdensis (strain ATCC BAA-1260 / CGDNIH1).